We begin with the raw amino-acid sequence, 466 residues long: Methylenetetrahydrofolate--tRNA-(uracil-5-)-methyltransferase TrmFO (466 aa).

Residue Gly16–Gly21 coordinates FAD.

Belongs to the MnmG family. TrmFO subfamily. Requires FAD as cofactor.

It localises to the cytoplasm. It catalyses the reaction uridine(54) in tRNA + (6R)-5,10-methylene-5,6,7,8-tetrahydrofolate + NADH + H(+) = 5-methyluridine(54) in tRNA + (6S)-5,6,7,8-tetrahydrofolate + NAD(+). The catalysed reaction is uridine(54) in tRNA + (6R)-5,10-methylene-5,6,7,8-tetrahydrofolate + NADPH + H(+) = 5-methyluridine(54) in tRNA + (6S)-5,6,7,8-tetrahydrofolate + NADP(+). In terms of biological role, catalyzes the folate-dependent formation of 5-methyl-uridine at position 54 (M-5-U54) in all tRNAs. This Maricaulis maris (strain MCS10) (Caulobacter maris) protein is Methylenetetrahydrofolate--tRNA-(uracil-5-)-methyltransferase TrmFO.